The following is a 333-amino-acid chain: Fe-S cluster assembly protein dre2 (333 aa).

Residues 1 to 29 (MSPITLDLTSDFNPANTTGAGSSSSQPRT) are disordered. Positions 7 to 28 (DLTSDFNPANTTGAGSSSSQPR) are enriched in polar residues. Positions 23-158 (SSSQPRTLLV…KPDYAEEEAV (136 aa)) are N-terminal SAM-like domain. Residues 159–225 (PLRFGLKRKT…EDTLLTEADL (67 aa)) form a linker region. Cys235, Cys246, Cys249, and Cys251 together coordinate [2Fe-2S] cluster. The interval 235-251 (CQPKPGKKRRACKDCTC) is fe-S binding site A. Residues Cys296, Cys299, Cys307, and Cys310 each contribute to the [4Fe-4S] cluster site. 2 consecutive short sequence motifs (cx2C motif) follow at residues 296–299 (CGSC) and 307–310 (CAGC). Residues 296–310 (CGSCALGDAFRCAGC) form a fe-S binding site B region.

This sequence belongs to the anamorsin family. As to quaternary structure, monomer. Interacts with tah18. Interacts with mia40. Requires [2Fe-2S] cluster as cofactor. The cofactor is [4Fe-4S] cluster.

It is found in the cytoplasm. The protein localises to the mitochondrion intermembrane space. Functionally, component of the cytosolic iron-sulfur (Fe-S) protein assembly (CIA) machinery required for the maturation of extramitochondrial Fe-S proteins. Part of an electron transfer chain functioning in an early step of cytosolic Fe-S biogenesis, facilitating the de novo assembly of a [4Fe-4S] cluster on the scaffold complex cfd1-nbp35. Electrons are transferred to dre2 from NADPH via the FAD- and FMN-containing protein tah18. Tah18-dre2 are also required for the assembly of the diferric tyrosyl radical cofactor of ribonucleotide reductase (RNR), probably by providing electrons for reduction during radical cofactor maturation in the catalytic small subunit rnr2. The protein is Fe-S cluster assembly protein dre2 of Neurospora crassa (strain ATCC 24698 / 74-OR23-1A / CBS 708.71 / DSM 1257 / FGSC 987).